Reading from the N-terminus, the 667-residue chain is UvrABC system protein C (667 aa).

The region spanning 43–122 is the GIY-YIG domain; the sequence is AEPGCYLMRD…IKNQQPHFNV (80 aa). In terms of domain architecture, UVR spans 232-267; that stretch reads QELKVLLEKQMERYSDRMDYESAANIRDQIKGLEQL.

It belongs to the UvrC family. As to quaternary structure, interacts with UvrB in an incision complex.

It is found in the cytoplasm. In terms of biological role, the UvrABC repair system catalyzes the recognition and processing of DNA lesions. UvrC both incises the 5' and 3' sides of the lesion. The N-terminal half is responsible for the 3' incision and the C-terminal half is responsible for the 5' incision. This Prochlorococcus marinus (strain MIT 9313) protein is UvrABC system protein C.